The following is a 301-amino-acid chain: Amylovoran biosynthesis glycosyltransferase AmsB (301 aa).

It belongs to the glycosyltransferase 2 family.

It functions in the pathway glycan metabolism; exopolysaccharide biosynthesis. Involved in the biosynthesis of amylovoran, which functions as a virulence factor. May function as a glycosyl transferase which transfers galactose from UDP-galactose to a lipid-linked amylovoran-subunit precursor. In Erwinia amylovora (Fire blight bacteria), this protein is Amylovoran biosynthesis glycosyltransferase AmsB (amsB).